The following is a 474-amino-acid chain: Kynureninase 2 (474 aa).

Pyridoxal 5'-phosphate is bound by residues Leu-144, Thr-145, 172–175 (FPSD), Asp-258, His-261, and Tyr-283. Position 284 is an N6-(pyridoxal phosphate)lysine (Lys-284). Residues Trp-323 and Thr-351 each coordinate pyridoxal 5'-phosphate.

This sequence belongs to the kynureninase family. As to quaternary structure, homodimer. Requires pyridoxal 5'-phosphate as cofactor.

The protein localises to the cytoplasm. The catalysed reaction is L-kynurenine + H2O = anthranilate + L-alanine + H(+). The enzyme catalyses 3-hydroxy-L-kynurenine + H2O = 3-hydroxyanthranilate + L-alanine + H(+). It participates in amino-acid degradation; L-kynurenine degradation; L-alanine and anthranilate from L-kynurenine: step 1/1. It functions in the pathway cofactor biosynthesis; NAD(+) biosynthesis; quinolinate from L-kynurenine: step 2/3. Functionally, catalyzes the cleavage of L-kynurenine (L-Kyn) and L-3-hydroxykynurenine (L-3OHKyn) into anthranilic acid (AA) and 3-hydroxyanthranilic acid (3-OHAA), respectively. This chain is Kynureninase 2 (bna5-2), found in Emericella nidulans (strain FGSC A4 / ATCC 38163 / CBS 112.46 / NRRL 194 / M139) (Aspergillus nidulans).